We begin with the raw amino-acid sequence, 183 residues long: A-type ATP synthase subunit E (183 aa).

The protein belongs to the V-ATPase E subunit family. In terms of assembly, has multiple subunits, A(3), B(3), C, D, E, F, G, I and K(x); there may be a few other subunits as well.

It localises to the cell membrane. Component of the A-type ATP synthase that produces ATP from ADP in the presence of a proton gradient across the membrane. The polypeptide is A-type ATP synthase subunit E (Methanosarcina mazei (strain ATCC BAA-159 / DSM 3647 / Goe1 / Go1 / JCM 11833 / OCM 88) (Methanosarcina frisia)).